We begin with the raw amino-acid sequence, 209 residues long: Claudin-like protein ZF-A9 (209 aa).

The next 4 helical transmembrane spans lie at 8–28 (LGTTLGTLGWLGIIISCAIPL), 81–101 (AILVISAIVGLIAMFASFAGG), 114–134 (ALVATTGGVAFIIAGILGLVP), and 159–179 (FGAAIFICWGAAVLLVIGGGL). A disordered region spans residues 187-209 (GRTSSRGRYTPASQNGRERSEYV). Residues 188 to 201 (RTSSRGRYTPASQN) are compositionally biased toward polar residues.

Belongs to the claudin family.

Its subcellular location is the cell membrane. The protein resides in the cell junction. It localises to the tight junction. In terms of biological role, component of tight junction (TJ) strands. The protein is Claudin-like protein ZF-A9 (cldng) of Danio rerio (Zebrafish).